A 337-amino-acid polypeptide reads, in one-letter code: Histidine N-acetyltransferase (337 aa).

Positions 1–2 (MK) are cleaved as a propeptide — removed in mature form. The region spanning 21–156 (LQFAVATEED…QGILLVRFRA (136 aa)) is the N-acetyltransferase domain.

The enzyme catalyses L-histidine + acetyl-CoA = N(alpha)-acetyl-L-histidine + CoA + H(+). Its function is as follows. Enzyme responsible for the N-acetyl-histidine (NAH) synthesis, which is a major constituent of brain and lens of ectothermic vertebrates. The protein is Histidine N-acetyltransferase (hisat) of Scomber australasicus (Blue mackerel).